Consider the following 205-residue polypeptide: MMRTLITIHPLPLLLLLQQLLQPVQFQEVDTDFDFPEEDKKEEFEEYSEQFFSIGPTRPPTKEKVKRRVLIEPGMPLNHIEYCNHEIMGKNVYYKHRCVAEHYFLLMQYDELQKICYNRFVPCKNGIRKCNRSKGLVEGVYCNLTEAFEIPACKYESLYRKGYVLITCSWQNEMQKLIPHTINDLVEPPEHRSFLSEDGVFVIPP.

The N-terminal stretch at 1-26 (MMRTLITIHPLPLLLLLQQLLQPVQF) is a signal peptide. Disulfide bonds link C98/C153, C116/C168, and C123/C130. Residues N131 and N143 are each glycosylated (N-linked (GlcNAc...) asparagine).

The protein belongs to the pancreatic ribonuclease family.

It is found in the secreted. Functionally, does not exhibit any ribonuclease activity. The sequence is that of Inactive ribonuclease-like protein 9 (RNASE9) from Gorilla gorilla gorilla (Western lowland gorilla).